The primary structure comprises 349 residues: MSSLSGKVQTVLGPIHPEQLGRTLTHEHLSMTFECCYCPPPAHQGTLSDAPILMKNLFWVKQNPYSNKENLLLSQEIEAITEEIMIFKAAGGGSIVENTTTGISRDIKMLKKMAEETGVNIISGAGFYVDATHSSSTRSMTVEQLTEVLVNEVLQGADGTNIKCGIIGEIGCSWPLTESEKKVLQATAEAQSQLGCPVNIHPGRNSDAPFHIIQILQEAGADISKTVMSHLDRTIFDETKLLEFAKLGSYLEYDLFGTEMLNYQFNQAVDMPSDNDRIKMLRLLINEGYEDRIVVSHDIHTKNRLLKYGGHGYSHILNNIVPKMLVRGISQQCVDKILLENPKQWLTFK.

A divalent metal cation-binding residues include histidine 26, histidine 28, glutamate 169, histidine 201, histidine 230, and aspartate 298.

This sequence belongs to the metallo-dependent hydrolases superfamily. Phosphotriesterase family. The cofactor is a divalent metal cation.

It is found in the cytoplasm. The protein resides in the cytosol. The enzyme catalyses N-acetyltaurine + H2O = taurine + acetate. It catalyses the reaction N-propanoyltaurine + H2O = propanoate + taurine. The catalysed reaction is N-acetyl-L-methionine + H2O = L-methionine + acetate. It carries out the reaction N-acetyl-L-isoleucine + H2O = L-isoleucine + acetate. The enzyme catalyses N-acetyl-L-leucine + H2O = L-leucine + acetate. It catalyses the reaction N-acetyl-L-valine + H2O = L-valine + acetate. N-acetyltaurine hydrolase that catalyzes the hydrolysis of N-acetyltaurine into taurine and acetate. PTER also acts on other N-acetyl amino acids (Met, Ile, Leu, Val) and N-propionyltaurine, but at lower rates. The chain is N-acetyltaurine hydrolase (pter) from Xenopus tropicalis (Western clawed frog).